Reading from the N-terminus, the 391-residue chain is Multidrug resistance protein MdtL (391 aa).

Transmembrane regions (helical) follow at residues 4–24 (FLICSFALVLLYPAGIDMYLV), 42–62 (IAFSVYLAGMAAAMLFAGKVA), 69–89 (PVAIPGAALFIIASVFCSLAE), 93–113 (LFLAGRFLQGLGAGCCYVVAF), 131–151 (LLNGITCIIPVLAPVLGHLIM), 158–178 (SLFWAMATMGIAVLMLSLFIL), 203–222 (FFLSRVVITTLSVSVILTFV), 245–265 (ALTAGVSMTVSFSTPFALGIF), 269–289 (TLMITSQVLFLAAGITLAVSP), 293–313 (ISLFGITLICAGFSIGFGVAM), 324–346 (AGVASSTLGIAQVCGSSLWIWLA), and 363–383 (ACSIVSLLLIMFVTPGRPVAA).

Belongs to the major facilitator superfamily. DHA1 family. MdtL (TC 2.A.1.2.22) subfamily.

Its subcellular location is the cell inner membrane. In terms of biological role, confers resistance to chloramphenicol. The polypeptide is Multidrug resistance protein MdtL (Escherichia fergusonii (strain ATCC 35469 / DSM 13698 / CCUG 18766 / IAM 14443 / JCM 21226 / LMG 7866 / NBRC 102419 / NCTC 12128 / CDC 0568-73)).